Here is a 166-residue protein sequence, read N- to C-terminus: CDP-archaeol synthase (166 aa).

Transmembrane regions (helical) follow at residues 39 to 59 (IRGF…QMYA), 61 to 81 (ISGL…LLAI), 104 to 124 (EWFL…TLLF), and 127 to 147 (IWML…LTPL).

It belongs to the CDP-archaeol synthase family. It depends on Mg(2+) as a cofactor.

It is found in the cell membrane. It carries out the reaction 2,3-bis-O-(geranylgeranyl)-sn-glycerol 1-phosphate + CTP + H(+) = CDP-2,3-bis-O-(geranylgeranyl)-sn-glycerol + diphosphate. It participates in membrane lipid metabolism; glycerophospholipid metabolism. Functionally, catalyzes the formation of CDP-2,3-bis-(O-geranylgeranyl)-sn-glycerol (CDP-archaeol) from 2,3-bis-(O-geranylgeranyl)-sn-glycerol 1-phosphate (DGGGP) and CTP. This reaction is the third ether-bond-formation step in the biosynthesis of archaeal membrane lipids. In Methanospirillum hungatei JF-1 (strain ATCC 27890 / DSM 864 / NBRC 100397 / JF-1), this protein is CDP-archaeol synthase.